The sequence spans 908 residues: Auxin response factor 6 (908 aa).

Residues 1-21 (MKLSPSAGGVSDQPPSPPEVA) are disordered. A DNA-binding region (TF-B3) is located at residues 134 to 236 (FCKTLTASDT…QLLLGIRRAN (103 aa)). The interval 525–556 (NEQKPQLQPQQQQQESHQQQPQHQQMQQQKHL) is disordered. Positions 526 to 556 (EQKPQLQPQQQQQESHQQQPQHQQMQQQKHL) are enriched in low complexity. The region spanning 777 to 861 (ATFVKVYKSG…SCIKILSPQE (85 aa)) is the PB1 domain.

The protein belongs to the ARF family. In terms of assembly, homodimers and heterodimers.

It is found in the nucleus. In terms of biological role, auxin response factors (ARFs) are transcriptional factors that bind specifically to the DNA sequence 5'-TGTCTC-3' found in the auxin-responsive promoter elements (AuxREs). This chain is Auxin response factor 6 (ARF6), found in Oryza sativa subsp. indica (Rice).